Consider the following 467-residue polypeptide: MKKLLLNTLIGLALLTCQTSFAQKTKAKFSPIKVETPARPANQQDVIQLVTPKLETVRVGFIGLGMRGPGAVERWTHIPGTQIVALCDLLPERVENAQKILEKAGLPKAASYAGDEKAWKKLCERDDIDVVYIATDWKHHADMGVYAMEHGKHVAIEVPAAMTLDEIWKLINTSEKTRKHCMQLENCVYDFFELTSLNMAQQGVFGEVLHVEGAYIHNLEDFWPYYWNNWRMDYNQKHRGDVYATHGMGPACQVLNIHRGDRMKTLVAMDTKAVNGPAYIKKSTGKEVKDFQNGDQTTTLIRTENGKTMLIQHNVMTPRPYSRMYQVVGADGYASKYPIEEYCLRPTQVDSNDVPNHEKLNAHGSVSEDVKKALMAKYKDPIHKELEETAKKVGGHGGMDYIMDYRLVYCLRNGLPLDMDVYDLAEWCCMAELTRLSIENGSAPVEVPDFTRGGWNKVQGYRHAFAE.

Residues 1–22 (MKKLLLNTLIGLALLTCQTSFA) form the signal peptide. Residues 66 to 67 (MR), D88, 137 to 140 (WKHH), 157 to 158 (EV), and N186 contribute to the NAD(+) site. Substrate contacts are provided by residues Y215, R231, 243–246 (YATH), and Y321. Y243 contributes to the NAD(+) binding site.

Belongs to the Gfo/Idh/MocA family. Glycosyl hydrolase 109 subfamily. The cofactor is NAD(+).

Glycosidase. The chain is Glycosyl hydrolase family 109 protein 1 from Bacteroides thetaiotaomicron (strain ATCC 29148 / DSM 2079 / JCM 5827 / CCUG 10774 / NCTC 10582 / VPI-5482 / E50).